The primary structure comprises 217 residues: Small ribosomal subunit protein uS3 (217 aa).

The region spanning 38-106 (IRNFIKKELA…QVHINIIEIK (69 aa)) is the KH type-2 domain.

The protein belongs to the universal ribosomal protein uS3 family. In terms of assembly, part of the 30S ribosomal subunit. Forms a tight complex with proteins S10 and S14.

Its function is as follows. Binds the lower part of the 30S subunit head. Binds mRNA in the 70S ribosome, positioning it for translation. This Streptococcus suis (strain 98HAH33) protein is Small ribosomal subunit protein uS3.